Consider the following 310-residue polypeptide: L-lactate dehydrogenase (310 aa).

NAD(+) contacts are provided by residues valine 11, aspartate 32, tyrosine 62, and 76–77 (GV). Residues glutamine 79, arginine 85, and 117–120 (NPVD) contribute to the substrate site. NAD(+) contacts are provided by residues 115–117 (ASN) and serine 140. 145-148 (DTAR) is a substrate binding site. Beta-D-fructose 1,6-bisphosphate-binding residues include arginine 150 and histidine 165. Histidine 172 acts as the Proton acceptor in catalysis. Threonine 227 is a substrate binding site.

This sequence belongs to the LDH/MDH superfamily. LDH family. As to quaternary structure, homotetramer.

It is found in the cytoplasm. It carries out the reaction (S)-lactate + NAD(+) = pyruvate + NADH + H(+). The protein operates within fermentation; pyruvate fermentation to lactate; (S)-lactate from pyruvate: step 1/1. Its activity is regulated as follows. Allosterically activated by fructose 1,6-bisphosphate (FBP). Functionally, catalyzes the conversion of lactate to pyruvate. In Allorhizobium ampelinum (strain ATCC BAA-846 / DSM 112012 / S4) (Agrobacterium vitis (strain S4)), this protein is L-lactate dehydrogenase.